We begin with the raw amino-acid sequence, 371 residues long: Lipoyl synthase, mitochondrial (371 aa).

Residues 1–24 (MLSRFKCSRLQLQKRAISVTKATT) constitute a mitochondrion transit peptide. Residues 20–29 (TKATTTTASQ) are compositionally biased toward polar residues. The interval 20-42 (TKATTTTASQPKRRRTTTFSDAL) is disordered. [4Fe-4S] cluster is bound by residues cysteine 107, cysteine 112, cysteine 118, cysteine 138, cysteine 142, cysteine 145, and serine 353. The region spanning 121-342 (GGDSSKATAT…RDKALELGFL (222 aa)) is the Radical SAM core domain.

This sequence belongs to the radical SAM superfamily. Lipoyl synthase family. [4Fe-4S] cluster is required as a cofactor.

The protein localises to the mitochondrion. The catalysed reaction is [[Fe-S] cluster scaffold protein carrying a second [4Fe-4S](2+) cluster] + N(6)-octanoyl-L-lysyl-[protein] + 2 oxidized [2Fe-2S]-[ferredoxin] + 2 S-adenosyl-L-methionine + 4 H(+) = [[Fe-S] cluster scaffold protein] + N(6)-[(R)-dihydrolipoyl]-L-lysyl-[protein] + 4 Fe(3+) + 2 hydrogen sulfide + 2 5'-deoxyadenosine + 2 L-methionine + 2 reduced [2Fe-2S]-[ferredoxin]. It participates in protein modification; protein lipoylation via endogenous pathway; protein N(6)-(lipoyl)lysine from octanoyl-[acyl-carrier-protein]: step 2/2. Functionally, catalyzes the radical-mediated insertion of two sulfur atoms into the C-6 and C-8 positions of the octanoyl moiety bound to the lipoyl domains of lipoate-dependent enzymes, thereby converting the octanoylated domains into lipoylated derivatives. The polypeptide is Lipoyl synthase, mitochondrial (Lachancea thermotolerans (strain ATCC 56472 / CBS 6340 / NRRL Y-8284) (Yeast)).